A 116-amino-acid polypeptide reads, in one-letter code: T cell receptor alpha variable 14/delta variable 4 (116 aa).

The signal sequence occupies residues 1-21 (MSLSSLLKVVTASLWLGPGIA). The 95-residue stretch at 22–116 (QKITQTQPGM…SAMYFCAMRE (95 aa)) folds into the Ig-like domain. Residues cysteine 43 and cysteine 112 are joined by a disulfide bond. A glycan (N-linked (GlcNAc...) asparagine) is linked at asparagine 78.

Alpha-beta TR is a heterodimer composed of an alpha and beta chain; disulfide-linked. The alpha-beta TR is associated with the transmembrane signaling CD3 coreceptor proteins to form the TR-CD3 (TcR or TCR). The assembly of alpha-beta TR heterodimers with CD3 occurs in the endoplasmic reticulum where a single alpha-beta TR heterodimer associates with one CD3D-CD3E heterodimer, one CD3G-CD3E heterodimer and one CD247 homodimer forming a stable octameric structure. CD3D-CD3E and CD3G-CD3E heterodimers preferentially associate with TR alpha and TR beta chains, respectively. The association of the CD247 homodimer is the last step of TcR assembly in the endoplasmic reticulum and is required for transport to the cell surface.

The protein resides in the cell membrane. Its function is as follows. V region of the variable domain of T cell receptor (TR) alpha chain that participates in the antigen recognition. Alpha-beta T cell receptors are antigen specific receptors which are essential to the immune response and are present on the cell surface of T lymphocytes. Recognize peptide-major histocompatibility (MH) (pMH) complexes that are displayed by antigen presenting cells (APC), a prerequisite for efficient T cell adaptive immunity against pathogens. Binding of alpha-beta TR to pMH complex initiates TR-CD3 clustering on the cell surface and intracellular activation of LCK that phosphorylates the ITAM motifs of CD3G, CD3D, CD3E and CD247 enabling the recruitment of ZAP70. In turn ZAP70 phosphorylates LAT, which recruits numerous signaling molecules to form the LAT signalosome. The LAT signalosome propagates signal branching to three major signaling pathways, the calcium, the mitogen-activated protein kinase (MAPK) kinase and the nuclear factor NF-kappa-B (NF-kB) pathways, leading to the mobilization of transcription factors that are critical for gene expression and essential for T cell growth and differentiation. The T cell repertoire is generated in the thymus, by V-(D)-J rearrangement. This repertoire is then shaped by intrathymic selection events to generate a peripheral T cell pool of self-MH restricted, non-autoaggressive T cells. Post-thymic interaction of alpha-beta TR with the pMH complexes shapes TR structural and functional avidity. The chain is T cell receptor alpha variable 14/delta variable 4 from Homo sapiens (Human).